The following is a 434-amino-acid chain: UDP-N-acetylmuramoyl-L-alanyl-D-glutamate--2,6-diaminopimelate ligase (434 aa).

A UDP-N-acetyl-alpha-D-muramoyl-L-alanyl-D-glutamate-binding site is contributed by Ser17. 68–74 lines the ATP pocket; sequence GTNGKTT. Residues 111-112, Ser138, Gln144, and Arg146 contribute to the UDP-N-acetyl-alpha-D-muramoyl-L-alanyl-D-glutamate site; that span reads TT. N6-carboxylysine is present on Lys178. Meso-2,6-diaminopimelate is bound by residues Arg326, 350–353, Gly401, and Glu405; that span reads DNPR. Positions 350 to 353 match the Meso-diaminopimelate recognition motif motif; it reads DNPR.

The protein belongs to the MurCDEF family. MurE subfamily. Mg(2+) is required as a cofactor. In terms of processing, carboxylation is probably crucial for Mg(2+) binding and, consequently, for the gamma-phosphate positioning of ATP.

The protein resides in the cytoplasm. The enzyme catalyses UDP-N-acetyl-alpha-D-muramoyl-L-alanyl-D-glutamate + meso-2,6-diaminopimelate + ATP = UDP-N-acetyl-alpha-D-muramoyl-L-alanyl-gamma-D-glutamyl-meso-2,6-diaminopimelate + ADP + phosphate + H(+). It participates in cell wall biogenesis; peptidoglycan biosynthesis. Its function is as follows. Catalyzes the addition of meso-diaminopimelic acid to the nucleotide precursor UDP-N-acetylmuramoyl-L-alanyl-D-glutamate (UMAG) in the biosynthesis of bacterial cell-wall peptidoglycan. This is UDP-N-acetylmuramoyl-L-alanyl-D-glutamate--2,6-diaminopimelate ligase from Wolinella succinogenes (strain ATCC 29543 / DSM 1740 / CCUG 13145 / JCM 31913 / LMG 7466 / NCTC 11488 / FDC 602W) (Vibrio succinogenes).